The sequence spans 523 residues: Sialate O-acetylesterase (523 aa).

An N-terminal signal peptide occupies residues M1 to G23. N-linked (GlcNAc...) asparagine glycosylation is found at N107, N138, N267, N290, N401, and N422.

Widely expressed with high expression in the testis, prostate, and colon.

The protein localises to the lysosome. It localises to the cytoplasm. The catalysed reaction is N-acetyl-9-O-acetylneuraminate + H2O = N-acetylneuraminate + acetate + H(+). It catalyses the reaction an Ac-O-9-sialoglycoconjugate + H2O = a sialoglycoconjugate + acetate + H(+). In terms of biological role, catalyzes the removal of O-acetyl ester groups from position 9 of the free diacetylated sialate N-acetyl-9-O-acetylneuraminate (Neu5,9Ac2) in the cytosol and of the diacetylated sialate residues of sialylglycoconjugates in the lysosomes. Together with the sialate-O-acetyltransferase they regulate the balance of acetylated sialoglycoconjugates, key players in various processes such as cell-cell interactions, host-pathogen recognition, and tumor antigenicity. The protein is Sialate O-acetylesterase (SIAE) of Homo sapiens (Human).